We begin with the raw amino-acid sequence, 195 residues long: HTH-type transcriptional regulator BetI (195 aa).

Positions 8–68 constitute an HTH tetR-type domain; the sequence is PIRRRQLIDA…ATMRDITSQL (61 aa). The H-T-H motif DNA-binding region spans 31-50; that stretch reads TIAQIARRAGVSTGIISHYF.

It participates in amine and polyamine biosynthesis; betaine biosynthesis via choline pathway [regulation]. Its function is as follows. Repressor involved in the biosynthesis of the osmoprotectant glycine betaine. It represses transcription of the choline transporter BetT and the genes of BetAB involved in the synthesis of glycine betaine. This Klebsiella pneumoniae (strain 342) protein is HTH-type transcriptional regulator BetI.